A 77-amino-acid chain; its full sequence is Large ribosomal subunit protein bL28 (77 aa).

The disordered stretch occupies residues 1 to 25; sequence MARVCQVTGKAPMSGNNVSHANNKT.

It belongs to the bacterial ribosomal protein bL28 family.

This Paraburkholderia phytofirmans (strain DSM 17436 / LMG 22146 / PsJN) (Burkholderia phytofirmans) protein is Large ribosomal subunit protein bL28.